Reading from the N-terminus, the 333-residue chain is Uroporphyrinogen decarboxylase (333 aa).

Substrate-binding positions include 21 to 25 (RQVGR), D70, Y139, S194, and H309.

Belongs to the uroporphyrinogen decarboxylase family. In terms of assembly, homodimer.

It localises to the cytoplasm. It catalyses the reaction uroporphyrinogen III + 4 H(+) = coproporphyrinogen III + 4 CO2. It participates in porphyrin-containing compound metabolism; protoporphyrin-IX biosynthesis; coproporphyrinogen-III from 5-aminolevulinate: step 4/4. Functionally, catalyzes the decarboxylation of four acetate groups of uroporphyrinogen-III to yield coproporphyrinogen-III. The polypeptide is Uroporphyrinogen decarboxylase (Chlamydia caviae (strain ATCC VR-813 / DSM 19441 / 03DC25 / GPIC) (Chlamydophila caviae)).